Here is a 280-residue protein sequence, read N- to C-terminus: Small ribosomal subunit protein uS3 (280 aa).

Residues 38–106 (IRRLLSTGLE…QVQLNILEVR (69 aa)) enclose the KH type-2 domain. Residues 215 to 280 (AAAAPAGAER…PAAEPQSTES (66 aa)) are disordered. Positions 238–280 (SGASGTTATGTEAGRAAASADESTAAGQPAEAAPAAEPQSTES) are enriched in low complexity.

Belongs to the universal ribosomal protein uS3 family. As to quaternary structure, part of the 30S ribosomal subunit. Forms a tight complex with proteins S10 and S14.

In terms of biological role, binds the lower part of the 30S subunit head. Binds mRNA in the 70S ribosome, positioning it for translation. This Mycolicibacterium paratuberculosis (strain ATCC BAA-968 / K-10) (Mycobacterium paratuberculosis) protein is Small ribosomal subunit protein uS3.